A 492-amino-acid polypeptide reads, in one-letter code: Bifunctional purine biosynthesis protein PurH (492 aa).

An MGS-like domain is found at 1 to 144 (MKKAILSVSN…KNYKHVTTIV (144 aa)).

This sequence belongs to the PurH family.

The catalysed reaction is (6R)-10-formyltetrahydrofolate + 5-amino-1-(5-phospho-beta-D-ribosyl)imidazole-4-carboxamide = 5-formamido-1-(5-phospho-D-ribosyl)imidazole-4-carboxamide + (6S)-5,6,7,8-tetrahydrofolate. It catalyses the reaction IMP + H2O = 5-formamido-1-(5-phospho-D-ribosyl)imidazole-4-carboxamide. It functions in the pathway purine metabolism; IMP biosynthesis via de novo pathway; 5-formamido-1-(5-phospho-D-ribosyl)imidazole-4-carboxamide from 5-amino-1-(5-phospho-D-ribosyl)imidazole-4-carboxamide (10-formyl THF route): step 1/1. The protein operates within purine metabolism; IMP biosynthesis via de novo pathway; IMP from 5-formamido-1-(5-phospho-D-ribosyl)imidazole-4-carboxamide: step 1/1. The chain is Bifunctional purine biosynthesis protein PurH from Staphylococcus aureus (strain USA300).